We begin with the raw amino-acid sequence, 683 residues long: DNA ligase (683 aa).

NAD(+)-binding positions include 36–40 (DAVYD), 85–86 (SL), and Glu-121. The N6-AMP-lysine intermediate role is filled by Lys-123. 4 residues coordinate NAD(+): Arg-144, Glu-180, Lys-296, and Lys-320. 4 residues coordinate Zn(2+): Cys-413, Cys-416, Cys-431, and Cys-437. The BRCT domain maps to 605–683 (PSEGHLSGKV…ESGWRVLAGL (79 aa)).

Belongs to the NAD-dependent DNA ligase family. LigA subfamily. Mg(2+) is required as a cofactor. It depends on Mn(2+) as a cofactor.

It catalyses the reaction NAD(+) + (deoxyribonucleotide)n-3'-hydroxyl + 5'-phospho-(deoxyribonucleotide)m = (deoxyribonucleotide)n+m + AMP + beta-nicotinamide D-nucleotide.. DNA ligase that catalyzes the formation of phosphodiester linkages between 5'-phosphoryl and 3'-hydroxyl groups in double-stranded DNA using NAD as a coenzyme and as the energy source for the reaction. It is essential for DNA replication and repair of damaged DNA. The chain is DNA ligase from Gluconobacter oxydans (strain 621H) (Gluconobacter suboxydans).